Consider the following 372-residue polypeptide: Cyclin-dependent kinase 9 (372 aa).

One can recognise a Protein kinase domain in the interval 19–315; that stretch reads YEKLAKIGQG…SDDALNHDFF (297 aa). Residues 25 to 33 and Lys48 contribute to the ATP site; that span reads IGQGTFGEV. Asp149 acts as the Proton acceptor in catalysis. Residues 341–372 are disordered; sequence PPRRRGGHMPQQPANQGRNPAATNQTEFDRVF. Polar residues predominate over residues 352-366; that stretch reads QPANQGRNPAATNQT.

Belongs to the protein kinase superfamily. CMGC Ser/Thr protein kinase family. CDC2/CDKX subfamily. In terms of assembly, associates with cyclin-T to form P-TEFb. Also associates with cyclin-K.

It is found in the nucleus. It carries out the reaction L-seryl-[protein] + ATP = O-phospho-L-seryl-[protein] + ADP + H(+). It catalyses the reaction L-threonyl-[protein] + ATP = O-phospho-L-threonyl-[protein] + ADP + H(+). The catalysed reaction is [DNA-directed RNA polymerase] + ATP = phospho-[DNA-directed RNA polymerase] + ADP + H(+). Functionally, member of the cyclin-dependent kinase pair (CDK9/cyclin-T) complex, also called positive transcription elongation factor b (P-TEFb), which facilitates the transition from abortive to production elongation by phosphorylating the CTD (C-terminal domain) of the large subunit of RNA polymerase II (RNAP II), SUPT5H and RDBP. The CDK9/cyclin-K complex also has a kinase activity toward CTD of RNAP II and can substitute for P-TEFb in vitro. This is Cyclin-dependent kinase 9 (CDK9) from Gallus gallus (Chicken).